Here is a 333-residue protein sequence, read N- to C-terminus: Transaldolase (333 aa).

Lys135 (schiff-base intermediate with substrate) is an active-site residue.

Belongs to the transaldolase family. Type 1 subfamily. As to quaternary structure, homodimer.

The protein resides in the cytoplasm. It carries out the reaction D-sedoheptulose 7-phosphate + D-glyceraldehyde 3-phosphate = D-erythrose 4-phosphate + beta-D-fructose 6-phosphate. It participates in carbohydrate degradation; pentose phosphate pathway; D-glyceraldehyde 3-phosphate and beta-D-fructose 6-phosphate from D-ribose 5-phosphate and D-xylulose 5-phosphate (non-oxidative stage): step 2/3. Functionally, transaldolase is important for the balance of metabolites in the pentose-phosphate pathway. This Prochlorococcus marinus (strain MIT 9312) protein is Transaldolase.